A 643-amino-acid polypeptide reads, in one-letter code: Pescadillo homolog (643 aa).

The 94-residue stretch at 319-412 (KLKTLFKGLK…RLLPTNKYFM (94 aa)) folds into the BRCT domain. Disordered stretches follow at residues 437-475 (AARKAAEGEEEEETFEPAEVNADHEHISDDEEVQDPENE), 492-571 (TDSL…YREN), and 609-643 (DKNARLLANKRERIEKQKRAEQMEKQKQQRKQILA). Residues 464 to 475 (SDDEEVQDPENE) are compositionally biased toward acidic residues. The segment covering 492–518 (TDSLNSGKKEGADDATDNGKDAAEKKQ) has biased composition (basic and acidic residues). The span at 524 to 544 (GESDDEDEEEEDDDDGEEEED) shows a compositional bias: acidic residues. Residues 569–643 (RENEAEKKIV…QKQQRKQILA (75 aa)) are a coiled coil. The span at 609–635 (DKNARLLANKRERIEKQKRAEQMEKQK) shows a compositional bias: basic and acidic residues.

This sequence belongs to the pescadillo family.

It localises to the nucleus. It is found in the nucleolus. Its subcellular location is the nucleoplasm. Its function is as follows. Required for maturation of ribosomal RNAs and formation of the large ribosomal subunit. This chain is Pescadillo homolog, found in Anopheles gambiae (African malaria mosquito).